The sequence spans 166 residues: Small ribosomal subunit protein bS18m (166 aa).

Residues 1-31 (MLGRRIFSPAPNRGFILCNLIQSNNSTRRGF) constitute a mitochondrion transit peptide. Residues 29–48 (RGFSDNRKFNERNSEASSNV) are disordered. The span at 30-42 (GFSDNRKFNERNS) shows a compositional bias: basic and acidic residues.

It belongs to the bacterial ribosomal protein bS18 family. In terms of assembly, component of the mitochondrial small ribosomal subunit (mt-SSU). Mature yeast 74S mitochondrial ribosomes consist of a small (37S) and a large (54S) subunit. The 37S small subunit contains a 15S ribosomal RNA (15S mt-rRNA) and at least 32 different proteins. The 54S large subunit contains a 21S rRNA (21S mt-rRNA) and at least 45 different proteins.

Its subcellular location is the mitochondrion. In terms of biological role, component of the mitochondrial ribosome (mitoribosome), a dedicated translation machinery responsible for the synthesis of mitochondrial genome-encoded proteins, including at least some of the essential transmembrane subunits of the mitochondrial respiratory chain. The mitoribosomes are attached to the mitochondrial inner membrane and translation products are cotranslationally integrated into the membrane. This chain is Small ribosomal subunit protein bS18m (rsm18), found in Schizosaccharomyces pombe (strain 972 / ATCC 24843) (Fission yeast).